The chain runs to 241 residues: Probable transcriptional regulatory protein Rmet_0785 (241 aa).

This sequence belongs to the TACO1 family.

The protein resides in the cytoplasm. This chain is Probable transcriptional regulatory protein Rmet_0785, found in Cupriavidus metallidurans (strain ATCC 43123 / DSM 2839 / NBRC 102507 / CH34) (Ralstonia metallidurans).